A 298-amino-acid chain; its full sequence is Probable endonuclease 4 (298 aa).

Zn(2+)-binding residues include His-69, His-111, Glu-146, Asp-180, His-183, His-215, Asp-228, His-230, and Glu-260.

Belongs to the AP endonuclease 2 family. Zn(2+) is required as a cofactor.

The catalysed reaction is Endonucleolytic cleavage to 5'-phosphooligonucleotide end-products.. Endonuclease IV plays a role in DNA repair. It cleaves phosphodiester bonds at apurinic or apyrimidinic (AP) sites, generating a 3'-hydroxyl group and a 5'-terminal sugar phosphate. In Bacillus cereus (strain G9842), this protein is Probable endonuclease 4.